Here is a 101-residue protein sequence, read N- to C-terminus: Small ribosomal subunit protein uS14 (101 aa).

The protein belongs to the universal ribosomal protein uS14 family. Part of the 30S ribosomal subunit. Contacts proteins S3 and S10.

Binds 16S rRNA, required for the assembly of 30S particles and may also be responsible for determining the conformation of the 16S rRNA at the A site. This chain is Small ribosomal subunit protein uS14, found in Orientia tsutsugamushi (strain Boryong) (Rickettsia tsutsugamushi).